The following is a 337-amino-acid chain: Cytoskeleton protein RodZ (337 aa).

Residues 1-111 (MNTEATHDQN…LGKRRKKRDG (111 aa)) lie on the Cytoplasmic side of the membrane. The HTH cro/C1-type domain occupies 19–71 (LRNAREQLGLSQQAVAERLCLKVSTVRDIEEDKAPADLASTFLRGYIRSYARL). The segment at residues 30–49 (QQAVAERLCLKVSTVRDIEE) is a DNA-binding region (H-T-H motif). A helical; Signal-anchor for type II membrane protein membrane pass occupies residues 112 to 132 (WLMTFTWLVLFVVIGLSGAWW). Residues 133–337 (WQDHKAQQEE…TLNAEQSPAQ (205 aa)) are Periplasmic-facing. The segment covering 145 to 167 (TMADQSSAELSSNSEQGQSVPLN) has biased composition (polar residues). The segment at 145-236 (TMADQSSAEL…TAATTPDGAA (92 aa)) is disordered. Over residues 168-207 (TSTTTDPATTSTPPASVDTTATNTQTPAVTAPAPAVDPQQ) the composition is skewed to low complexity. Residues 208–218 (NAVVSPSQANV) are compositionally biased toward polar residues. Positions 219-236 (DTAATPAPTAATTPDGAA) are enriched in low complexity.

The protein belongs to the RodZ family.

The protein resides in the cell inner membrane. In terms of biological role, cytoskeletal protein that is involved in cell-shape control through regulation of the length of the long axis. The chain is Cytoskeleton protein RodZ from Escherichia coli O139:H28 (strain E24377A / ETEC).